We begin with the raw amino-acid sequence, 566 residues long: NAD-dependent malic enzyme (566 aa).

The active-site Proton donor is the Tyr104. Arg157 is an NAD(+) binding site. Lys175 acts as the Proton acceptor in catalysis. Residues Glu246, Asp247, and Asp270 each coordinate a divalent metal cation. Residues Asp270 and Asn419 each contribute to the NAD(+) site.

This sequence belongs to the malic enzymes family. In terms of assembly, homotetramer. The cofactor is Mg(2+). Requires Mn(2+) as cofactor.

The catalysed reaction is (S)-malate + NAD(+) = pyruvate + CO2 + NADH. It catalyses the reaction oxaloacetate + H(+) = pyruvate + CO2. The polypeptide is NAD-dependent malic enzyme (Cronobacter sakazakii (strain ATCC BAA-894) (Enterobacter sakazakii)).